Here is a 30-residue protein sequence, read N- to C-terminus: Agglutinin alpha-1 chain (30 aa).

Residues G1–V30 enclose the Jacalin-type lectin domain.

Belongs to the jacalin lectin family. As to quaternary structure, tetramer of four alpha chains associated with two or four beta chains.

Functionally, N-acetyl-galactosamine and D-galactose specific lectin. Binds the Tn-antigen structure GalNAc-alpha-1-O-Ser, the T-antigen structure Gal-beta1-3-GalNAc and IgA. The protein is Agglutinin alpha-1 chain of Morus nigra (Black mulberry).